Reading from the N-terminus, the 138-residue chain is Acidic phospholipase A2 Cvv-E6e (138 aa).

The N-terminal stretch at 1 to 16 is a signal peptide; that stretch reads MRTLWILAVLLLGVEG. Cystine bridges form between Cys42–Cys131, Cys44–Cys60, Cys59–Cys111, Cys65–Cys138, Cys66–Cys104, Cys73–Cys97, and Cys91–Cys102. 3 residues coordinate Ca(2+): Tyr43, Gly45, and Gly47. The active site involves His63. Asp64 serves as a coordination point for Ca(2+). Asp105 is a catalytic residue.

Ca(2+) is required as a cofactor. Expressed by the venom gland.

Its subcellular location is the secreted. It catalyses the reaction a 1,2-diacyl-sn-glycero-3-phosphocholine + H2O = a 1-acyl-sn-glycero-3-phosphocholine + a fatty acid + H(+). Its function is as follows. Snake venom phospholipase A2 (PLA2) that significantly inhibits ADP-induced platelet aggregation in platelet-rich plasma of human, rabbit and guinea pig. PLA2 catalyzes the calcium-dependent hydrolysis of the 2-acyl groups in 3-sn-phosphoglycerides. This chain is Acidic phospholipase A2 Cvv-E6e, found in Crotalus viridis viridis (Prairie rattlesnake).